Reading from the N-terminus, the 503-residue chain is ATP synthase subunit beta (503 aa).

ATP is bound at residue 157 to 164; sequence GGAGVGKT.

It belongs to the ATPase alpha/beta chains family. In terms of assembly, F-type ATPases have 2 components, CF(1) - the catalytic core - and CF(0) - the membrane proton channel. CF(1) has five subunits: alpha(3), beta(3), gamma(1), delta(1), epsilon(1). CF(0) has three main subunits: a(1), b(2) and c(9-12). The alpha and beta chains form an alternating ring which encloses part of the gamma chain. CF(1) is attached to CF(0) by a central stalk formed by the gamma and epsilon chains, while a peripheral stalk is formed by the delta and b chains.

The protein resides in the cell membrane. The enzyme catalyses ATP + H2O + 4 H(+)(in) = ADP + phosphate + 5 H(+)(out). In terms of biological role, produces ATP from ADP in the presence of a proton gradient across the membrane. The catalytic sites are hosted primarily by the beta subunits. This is ATP synthase subunit beta from Christiangramia forsetii (strain DSM 17595 / CGMCC 1.15422 / KT0803) (Gramella forsetii).